A 296-amino-acid polypeptide reads, in one-letter code: Large ribosomal subunit protein uL18B (296 aa).

Positions 251 to 296 (PVHEKKPKKEVKKKRWNRAKLSLEQKKDRVAQKKASFLRAQEKADS) are disordered. The segment covering 255–268 (KKPKKEVKKKRWNR) has biased composition (basic residues). The segment covering 271–281 (LSLEQKKDRVA) has biased composition (basic and acidic residues).

The protein belongs to the universal ribosomal protein uL18 family. In terms of assembly, component of the large ribosomal subunit (LSU). Part of a LSU subcomplex, the 5S RNP which is composed of the 5S RNA, RPL5 and RPL11.

The protein localises to the cytoplasm. It is found in the nucleus. The protein resides in the nucleolus. Functionally, component of the ribosome, a large ribonucleoprotein complex responsible for the synthesis of proteins in the cell. The small ribosomal subunit (SSU) binds messenger RNAs (mRNAs) and translates the encoded message by selecting cognate aminoacyl-transfer RNA (tRNA) molecules. The large subunit (LSU) contains the ribosomal catalytic site termed the peptidyl transferase center (PTC), which catalyzes the formation of peptide bonds, thereby polymerizing the amino acids delivered by tRNAs into a polypeptide chain. The nascent polypeptides leave the ribosome through a tunnel in the LSU and interact with protein factors that function in enzymatic processing, targeting, and the membrane insertion of nascent chains at the exit of the ribosomal tunnel. As part of the 5S RNP/5S ribonucleoprotein particle it is an essential component of the LSU, required for its formation and the maturation of rRNAs. It also couples ribosome biogenesis to p53/TP53 activation. As part of the 5S RNP it accumulates in the nucleoplasm and inhibits MDM2, when ribosome biogenesis is perturbed, mediating the stabilization and the activation of TP53. The polypeptide is Large ribosomal subunit protein uL18B (rpl5-b) (Xenopus laevis (African clawed frog)).